The following is a 294-amino-acid chain: Halotolerance protein HAL1 (294 aa).

Positions 115 to 153 are disordered; it reads LKRGTKEQEDINSSTSKKSAVINNFSGEKTPNPRPQSSN. Over residues 125–153 the composition is skewed to polar residues; sequence INSSTSKKSAVINNFSGEKTPNPRPQSSN. S266 is subject to Phosphoserine.

Its subcellular location is the cytoplasm. Its function is as follows. Involved in salt tolerance. The protein is Halotolerance protein HAL1 (HAL1) of Saccharomyces cerevisiae (strain ATCC 204508 / S288c) (Baker's yeast).